The sequence spans 298 residues: Hydroxymethylglutaryl-CoA lyase, mitochondrial (298 aa).

The region spanning 6–273 is the Pyruvate carboxyltransferase domain; sequence VKVVEVGPRD…HTGVDLQKLM (268 aa). Residue Arg-14 participates in substrate binding. Residue Asp-15 coordinates a divalent metal cation. The residue at position 21 (Lys-21) is an N6-acetyllysine. A divalent metal cation-binding residues include His-206 and His-208. Residue Cys-239 is part of the active site. Position 248 (Asn-248) interacts with a divalent metal cation. Residues 296–298 carry the Microbody targeting signal motif; that stretch reads CRL.

This sequence belongs to the HMG-CoA lyase family. In terms of assembly, homodimer; disulfide-linked. Can also form homotetramers.

It is found in the mitochondrion matrix. It localises to the peroxisome. The catalysed reaction is (3S)-3-hydroxy-3-methylglutaryl-CoA = acetoacetate + acetyl-CoA. Its pathway is metabolic intermediate metabolism; (S)-3-hydroxy-3-methylglutaryl-CoA degradation; acetoacetate from (S)-3-hydroxy-3-methylglutaryl-CoA: step 1/1. Functionally, mitochondrial 3-hydroxy-3-methylglutaryl-CoA lyase that catalyzes a cation-dependent cleavage of (S)-3-hydroxy-3-methylglutaryl-CoA into acetyl-CoA and acetoacetate, a key step in ketogenesis. Terminal step in leucine catabolism. Ketone bodies (beta-hydroxybutyrate, acetoacetate and acetone) are essential as an alternative source of energy to glucose, as lipid precursors and as regulators of metabolism. The polypeptide is Hydroxymethylglutaryl-CoA lyase, mitochondrial (HMGCL) (Gallus gallus (Chicken)).